The chain runs to 59 residues: UPF0434 protein Pnec_0311 (59 aa).

It belongs to the UPF0434 family.

The polypeptide is UPF0434 protein Pnec_0311 (Polynucleobacter necessarius subsp. necessarius (strain STIR1)).